Reading from the N-terminus, the 119-residue chain is Large ribosomal subunit protein bL20 (119 aa).

Belongs to the bacterial ribosomal protein bL20 family.

In terms of biological role, binds directly to 23S ribosomal RNA and is necessary for the in vitro assembly process of the 50S ribosomal subunit. It is not involved in the protein synthesizing functions of that subunit. This chain is Large ribosomal subunit protein bL20, found in Stenotrophomonas maltophilia (strain R551-3).